The following is a 492-amino-acid chain: N-succinylglutamate 5-semialdehyde dehydrogenase (492 aa).

220–225 (GSANTG) lines the NAD(+) pocket. Active-site residues include E243 and C277.

It belongs to the aldehyde dehydrogenase family. AstD subfamily.

It catalyses the reaction N-succinyl-L-glutamate 5-semialdehyde + NAD(+) + H2O = N-succinyl-L-glutamate + NADH + 2 H(+). It participates in amino-acid degradation; L-arginine degradation via AST pathway; L-glutamate and succinate from L-arginine: step 4/5. Catalyzes the NAD-dependent reduction of succinylglutamate semialdehyde into succinylglutamate. This is N-succinylglutamate 5-semialdehyde dehydrogenase from Escherichia coli O7:K1 (strain IAI39 / ExPEC).